The sequence spans 644 residues: Methionine--tRNA ligase (644 aa).

Positions 14–24 (YYPSAKLHIGN) match the 'HIGH' region motif. 4 residues coordinate Zn(2+): C129, C132, C146, and C149. Positions 299–303 (KMSKS) match the 'KMSKS' region motif. K302 is a binding site for ATP. Residues 542 to 644 (DVDKLDLRVV…EDIPTGSIVR (103 aa)) form the tRNA-binding domain.

Belongs to the class-I aminoacyl-tRNA synthetase family. MetG type 2A subfamily. Homodimer. The cofactor is Zn(2+).

Its subcellular location is the cytoplasm. The enzyme catalyses tRNA(Met) + L-methionine + ATP = L-methionyl-tRNA(Met) + AMP + diphosphate. Functionally, is required not only for elongation of protein synthesis but also for the initiation of all mRNA translation through initiator tRNA(fMet) aminoacylation. The sequence is that of Methionine--tRNA ligase (metG) from Clostridium acetobutylicum (strain ATCC 824 / DSM 792 / JCM 1419 / IAM 19013 / LMG 5710 / NBRC 13948 / NRRL B-527 / VKM B-1787 / 2291 / W).